Consider the following 225-residue polypeptide: tRNA (guanine-N(7)-)-methyltransferase (225 aa).

The S-adenosyl-L-methionine site is built by glutamate 56, glutamate 81, aspartate 108, and aspartate 131. Aspartate 131 is a catalytic residue. Substrate contacts are provided by residues lysine 135, aspartate 167, and 204–207; that span reads TKFE.

This sequence belongs to the class I-like SAM-binding methyltransferase superfamily. TrmB family.

The catalysed reaction is guanosine(46) in tRNA + S-adenosyl-L-methionine = N(7)-methylguanosine(46) in tRNA + S-adenosyl-L-homocysteine. It functions in the pathway tRNA modification; N(7)-methylguanine-tRNA biosynthesis. Functionally, catalyzes the formation of N(7)-methylguanine at position 46 (m7G46) in tRNA. The sequence is that of tRNA (guanine-N(7)-)-methyltransferase from Legionella pneumophila (strain Corby).